The chain runs to 490 residues: UDP-glucosyl transferase 73M2 (490 aa).

Residue His-20 is the Proton acceptor of the active site. Catalysis depends on Asp-124, which acts as the Charge relay. UDP contacts are provided by Ser-297, Trp-353, Ala-354, His-371, Asn-375, Ser-376, Glu-379, and Tyr-393.

Belongs to the UDP-glycosyltransferase family. Mainly expressed in flowers, flower buds and young leaves, and, to a lesser extent, in old leaves, stems and roots.

It functions in the pathway secondary metabolite biosynthesis; terpenoid biosynthesis. Functionally, component of the oleanane-type triterpene saponins (e.g. saponarioside A and saponarioside B) biosynthetic pathway, leading to the production of natural products with detergent properties used as traditional sources of soap. A glycosyltransferase that mediates the conversion of QA-triFRX to QA-triFRXX via the elongation of the C-28 sugar chain with a D-xylose. This chain is UDP-glucosyl transferase 73M2, found in Saponaria officinalis (Common soapwort).